The chain runs to 622 residues: Low affinity potassium transport system protein Kup (622 aa).

A run of 12 helical transmembrane segments spans residues 9–29, 49–69, 103–123, 137–157, 165–185, 213–233, 247–267, 276–296, 337–357, 363–383, 396–416, and 419–439; these read LPAI…TSPL, VFGF…IKYL, VIMG…TPAI, PQLD…LFMI, VGKL…VLGL, VSFI…ALYA, WFTV…ALLL, PFFL…AALA, IYIP…IVSF, LAAA…ILST, FVAL…SANL, and LLSG…IMTT.

It belongs to the HAK/KUP transporter (TC 2.A.72) family.

Its subcellular location is the cell inner membrane. It carries out the reaction K(+)(in) + H(+)(in) = K(+)(out) + H(+)(out). Responsible for the low-affinity transport of potassium into the cell. Likely operates as a K(+):H(+) symporter. The chain is Low affinity potassium transport system protein Kup from Salmonella paratyphi B (strain ATCC BAA-1250 / SPB7).